The chain runs to 116 residues: MQEVVTGKRAELLSAEFLKKNNLTIICKNYRIDGGEVDIIARDGHYWVFCEVKFRDDESFAAVIEQIQPQQCRRIRYTARHYLLSNNIDEHTAAIRFDVIAIVGQPTKIEWFKDAF.

Belongs to the UPF0102 family.

The polypeptide is UPF0102 protein IL0423 (Idiomarina loihiensis (strain ATCC BAA-735 / DSM 15497 / L2-TR)).